We begin with the raw amino-acid sequence, 724 residues long: Pediocin PA-1 transport/processing ATP-binding protein PedD (724 aa).

Residues glutamine 13–isoleucine 140 form the Peptidase C39 domain. Cysteine 19 is a catalytic residue. 6 helical membrane passes run isoleucine 170–phenylalanine 190, leucine 207–isoleucine 227, threonine 284–tyrosine 304, isoleucine 307–phenylalanine 327, isoleucine 396–valine 416, and leucine 426–leucine 446. The ABC transmembrane type-1 domain maps to isoleucine 170–alanine 452. The 237-residue stretch at isoleucine 486–asparagine 722 folds into the ABC transporter domain. Glycine 519 to threonine 526 lines the ATP pocket.

The protein belongs to the ABC transporter superfamily. Pediocin PA-1 exporter (TC 3.A.1.112.2) family.

Its subcellular location is the cell membrane. Functionally, involved in the export process of the bacteriocin pediocin PA-1/AcH. Is also essential for pediocin production. The sequence is that of Pediocin PA-1 transport/processing ATP-binding protein PedD (pedD) from Pediococcus acidilactici.